A 219-amino-acid chain; its full sequence is Guanylate kinase (219 aa).

In terms of domain architecture, Guanylate kinase-like spans glycine 15–lysine 194. Serine 22–threonine 29 contacts ATP.

It belongs to the guanylate kinase family.

It is found in the cytoplasm. The enzyme catalyses GMP + ATP = GDP + ADP. In terms of biological role, essential for recycling GMP and indirectly, cGMP. The sequence is that of Guanylate kinase from Rhodopseudomonas palustris (strain BisB18).